Consider the following 346-residue polypeptide: Cobalt transport protein CbiM (346 aa).

An N-terminal signal peptide occupies residues 1–25 (MKRITLYAAGSAIIGAMLLAGPAHA). 8 helical membrane-spanning segments follow: residues 31-51 (GILP…FLAL), 68-88 (PLVG…IPVP), 101-121 (IAAI…ALLI), 133-153 (TLGA…WFVF), 159-179 (LGAG…WATY), 196-216 (FYPL…PLGV), 255-275 (ATVV…AGPS), and 312-332 (LLLF…GYFW).

Belongs to the CbiM family. As to quaternary structure, forms an energy-coupling factor (ECF) transporter complex composed of an ATP-binding protein (A component, CbiO), a transmembrane protein (T component, CbiQ) and 2 possible substrate-capture proteins (S components, CbiM and CbiN) of unknown stoichimetry.

The protein localises to the cell inner membrane. The protein operates within cofactor biosynthesis; adenosylcobalamin biosynthesis. In terms of biological role, part of the energy-coupling factor (ECF) transporter complex CbiMNOQ involved in cobalt import. This is Cobalt transport protein CbiM from Geobacter sulfurreducens (strain ATCC 51573 / DSM 12127 / PCA).